A 272-amino-acid polypeptide reads, in one-letter code: 2-dehydro-3-deoxyphosphooctonate aldolase (272 aa).

This sequence belongs to the KdsA family.

It is found in the cytoplasm. The catalysed reaction is D-arabinose 5-phosphate + phosphoenolpyruvate + H2O = 3-deoxy-alpha-D-manno-2-octulosonate-8-phosphate + phosphate. Its pathway is carbohydrate biosynthesis; 3-deoxy-D-manno-octulosonate biosynthesis; 3-deoxy-D-manno-octulosonate from D-ribulose 5-phosphate: step 2/3. It functions in the pathway bacterial outer membrane biogenesis; lipopolysaccharide biosynthesis. In Trichlorobacter lovleyi (strain ATCC BAA-1151 / DSM 17278 / SZ) (Geobacter lovleyi), this protein is 2-dehydro-3-deoxyphosphooctonate aldolase.